The sequence spans 145 residues: MMINIRRSRHEEGEKLIAIWRRSVDATHDFLSNAYRAELEELVSDFLPEAPLWVAVTDQDEPVGFMLLTGEHMDALFIDPDVRGQGIGKMLVEHALTLAPGLTTNVNEQNTQAVGFYKKMGFKVTGRSEVDDLGKPYPLLNLIYP.

An N-acetyltransferase domain is found at I3–Y144.

It belongs to the acetyltransferase family.

The catalysed reaction is L-lysyl-[protein] + acetyl-CoA = N(6)-acetyl-L-lysyl-[protein] + CoA + H(+). N-epsilon-lysine acetyltransferase that catalyzes acetylation of a large number of proteins. This Salmonella typhimurium (strain LT2 / SGSC1412 / ATCC 700720) protein is Peptidyl-lysine N-acetyltransferase YjaB (yjaB).